Consider the following 458-residue polypeptide: Argininosuccinate lyase (458 aa).

Belongs to the lyase 1 family. Argininosuccinate lyase subfamily.

The protein resides in the cytoplasm. It catalyses the reaction 2-(N(omega)-L-arginino)succinate = fumarate + L-arginine. It functions in the pathway amino-acid biosynthesis; L-arginine biosynthesis; L-arginine from L-ornithine and carbamoyl phosphate: step 3/3. This chain is Argininosuccinate lyase, found in Glaesserella parasuis serovar 5 (strain SH0165) (Haemophilus parasuis).